We begin with the raw amino-acid sequence, 157 residues long: DNA gyrase inhibitor (157 aa).

The protein belongs to the DNA gyrase inhibitor family. Interacts with DNA gyrase.

The protein resides in the cytoplasm. Its function is as follows. Inhibits the supercoiling activity of DNA gyrase. Acts by inhibiting DNA gyrase at an early step, prior to (or at the step of) binding of DNA by the gyrase. It protects cells against toxins that target DNA gyrase, by inhibiting activity of these toxins and reducing the formation of lethal double-strand breaks in the cell. This is DNA gyrase inhibitor from Enterobacter lignolyticus (strain SCF1).